Here is a 263-residue protein sequence, read N- to C-terminus: 4-hydroxy-tetrahydrodipicolinate reductase (263 aa).

Residues Gly7–Met12, Gly96–Thr98, and Ala122–Phe125 contribute to the NAD(+) site. The active-site Proton donor/acceptor is His152. Position 153 (His153) interacts with (S)-2,3,4,5-tetrahydrodipicolinate. The Proton donor role is filled by Lys156. Residue Gly162–Thr163 participates in (S)-2,3,4,5-tetrahydrodipicolinate binding.

This sequence belongs to the DapB family.

It is found in the cytoplasm. The catalysed reaction is (S)-2,3,4,5-tetrahydrodipicolinate + NAD(+) + H2O = (2S,4S)-4-hydroxy-2,3,4,5-tetrahydrodipicolinate + NADH + H(+). It carries out the reaction (S)-2,3,4,5-tetrahydrodipicolinate + NADP(+) + H2O = (2S,4S)-4-hydroxy-2,3,4,5-tetrahydrodipicolinate + NADPH + H(+). It participates in amino-acid biosynthesis; L-lysine biosynthesis via DAP pathway; (S)-tetrahydrodipicolinate from L-aspartate: step 4/4. In terms of biological role, catalyzes the conversion of 4-hydroxy-tetrahydrodipicolinate (HTPA) to tetrahydrodipicolinate. This is 4-hydroxy-tetrahydrodipicolinate reductase from Listeria monocytogenes serovar 1/2a (strain ATCC BAA-679 / EGD-e).